Reading from the N-terminus, the 100-residue chain is Integration host factor subunit alpha 2 (100 aa).

The protein belongs to the bacterial histone-like protein family. As to quaternary structure, heterodimer of an alpha and a beta chain.

This protein is one of the two subunits of integration host factor, a specific DNA-binding protein that functions in genetic recombination as well as in transcriptional and translational control. This Dechloromonas aromatica (strain RCB) protein is Integration host factor subunit alpha 2.